Reading from the N-terminus, the 220-residue chain is MRVGVVVFPGSNCDRDALHAVERAGAEPVELWHADADLKGSDAVILPGGFSYGDYLRPGAIARFARVMGPLEAFAREGGPVLGVCNGFQVLCEAHLLPGALLQNRGLRFVCRRVRVRVERADTPWTAACAPGEELTLPVAHNEGNYFADPATLARLEEEGRVVLRYLENPNGSANDIAGVCSEGRNVVGLMPHPERASDPLLGSGEGLGILRSVLAGAKV.

The Glutamine amidotransferase type-1 domain occupies 2–220; the sequence is RVGVVVFPGS…LRSVLAGAKV (219 aa). C85 serves as the catalytic Nucleophile. Residues H193 and E195 contribute to the active site.

As to quaternary structure, part of the FGAM synthase complex composed of 1 PurL, 1 PurQ and 2 PurS subunits.

It is found in the cytoplasm. It carries out the reaction N(2)-formyl-N(1)-(5-phospho-beta-D-ribosyl)glycinamide + L-glutamine + ATP + H2O = 2-formamido-N(1)-(5-O-phospho-beta-D-ribosyl)acetamidine + L-glutamate + ADP + phosphate + H(+). The enzyme catalyses L-glutamine + H2O = L-glutamate + NH4(+). Its pathway is purine metabolism; IMP biosynthesis via de novo pathway; 5-amino-1-(5-phospho-D-ribosyl)imidazole from N(2)-formyl-N(1)-(5-phospho-D-ribosyl)glycinamide: step 1/2. Part of the phosphoribosylformylglycinamidine synthase complex involved in the purines biosynthetic pathway. Catalyzes the ATP-dependent conversion of formylglycinamide ribonucleotide (FGAR) and glutamine to yield formylglycinamidine ribonucleotide (FGAM) and glutamate. The FGAM synthase complex is composed of three subunits. PurQ produces an ammonia molecule by converting glutamine to glutamate. PurL transfers the ammonia molecule to FGAR to form FGAM in an ATP-dependent manner. PurS interacts with PurQ and PurL and is thought to assist in the transfer of the ammonia molecule from PurQ to PurL. This Rubrobacter xylanophilus (strain DSM 9941 / JCM 11954 / NBRC 16129 / PRD-1) protein is Phosphoribosylformylglycinamidine synthase subunit PurQ.